Here is a 409-residue protein sequence, read N- to C-terminus: Endoglucanase B (409 aa).

A signal peptide spans 1-21 (MKLKRIAALLTAAVMSVGVMA). The interval 23 to 66 (CGGSKSDDKSKADTKSAAETSGAEGDSSESEEIPVSQTHTNDPM) is disordered. The segment covering 27-38 (KSDDKSKADTKS) has biased composition (basic and acidic residues). Residues 57–66 (VSQTHTNDPM) are compositionally biased toward polar residues. The Proton donor role is filled by glutamate 212. The active-site Nucleophile is the glutamate 332.

Belongs to the glycosyl hydrolase 5 (cellulase A) family.

The enzyme catalyses Endohydrolysis of (1-&gt;4)-beta-D-glucosidic linkages in cellulose, lichenin and cereal beta-D-glucans.. The chain is Endoglucanase B (celB) from Ruminococcus albus.